The following is a 122-amino-acid chain: Large ribosomal subunit protein bL12 (122 aa).

The protein belongs to the bacterial ribosomal protein bL12 family. As to quaternary structure, homodimer. Part of the ribosomal stalk of the 50S ribosomal subunit. Forms a multimeric L10(L12)X complex, where L10 forms an elongated spine to which 2 to 4 L12 dimers bind in a sequential fashion. Binds GTP-bound translation factors.

Forms part of the ribosomal stalk which helps the ribosome interact with GTP-bound translation factors. Is thus essential for accurate translation. The chain is Large ribosomal subunit protein bL12 from Dichelobacter nodosus (strain VCS1703A).